A 298-amino-acid chain; its full sequence is Inosose dehydratase (298 aa).

Belongs to the IolE/MocC family. Requires glutathione as cofactor. Co(2+) serves as cofactor. It depends on Mn(2+) as a cofactor.

It carries out the reaction scyllo-inosose = 3D-3,5/4-trihydroxycyclohexane-1,2-dione + H2O. Catalyzes the dehydration of inosose (2-keto-myo-inositol, 2KMI or 2,4,6/3,5-pentahydroxycyclohexanone) to 3D-(3,5/4)-trihydroxycyclohexane-1,2-dione (D-2,3-diketo-4-deoxy-epi-inositol). This Glaesserella parasuis serovar 5 (strain SH0165) (Haemophilus parasuis) protein is Inosose dehydratase.